Consider the following 171-residue polypeptide: UPF0316 protein EAT1b_0871 (171 aa).

The next 3 helical transmembrane spans lie at 4-24 (ILLI…RTIM), 32-52 (IAGL…GIVF), and 57-77 (TVGM…GGFV).

It belongs to the UPF0316 family.

The protein localises to the cell membrane. The chain is UPF0316 protein EAT1b_0871 from Exiguobacterium sp. (strain ATCC BAA-1283 / AT1b).